The following is a 129-amino-acid chain: M-zodatoxin-Lt8k (129 aa).

An N-terminal signal peptide occupies residues 1-20 (MKYFVVALALVAAFACIAES). A propeptide spanning residues 21 to 60 (KPAESEHELAEVEEENELADLEDAVWLEHLADLSDLEEAR) is cleaved from the precursor.

It belongs to the cationic peptide 06 (cytoinsectotoxin) family. Expressed by the venom gland.

The protein localises to the secreted. In terms of biological role, insecticidal, cytolytic and antimicrobial peptide. Forms voltage-dependent, ion-permeable channels in membranes. At high concentration causes cell membrane lysis. The protein is M-zodatoxin-Lt8k (cit 1-10) of Lachesana tarabaevi (Spider).